The sequence spans 120 residues: NAD(P)H-quinone oxidoreductase subunit 3, chloroplastic (120 aa).

3 helical membrane passes run 9–29, 64–84, and 88–108; these read IFWA…LFSG, MFAL…PWAM, and ILGV…IVGL.

This sequence belongs to the complex I subunit 3 family. In terms of assembly, NDH is composed of at least 16 different subunits, 5 of which are encoded in the nucleus.

The protein resides in the plastid. Its subcellular location is the chloroplast thylakoid membrane. The catalysed reaction is a plastoquinone + NADH + (n+1) H(+)(in) = a plastoquinol + NAD(+) + n H(+)(out). The enzyme catalyses a plastoquinone + NADPH + (n+1) H(+)(in) = a plastoquinol + NADP(+) + n H(+)(out). Functionally, NDH shuttles electrons from NAD(P)H:plastoquinone, via FMN and iron-sulfur (Fe-S) centers, to quinones in the photosynthetic chain and possibly in a chloroplast respiratory chain. The immediate electron acceptor for the enzyme in this species is believed to be plastoquinone. Couples the redox reaction to proton translocation, and thus conserves the redox energy in a proton gradient. This chain is NAD(P)H-quinone oxidoreductase subunit 3, chloroplastic, found in Spinacia oleracea (Spinach).